The chain runs to 392 residues: NADH-quinone oxidoreductase subunit D (392 aa).

The protein belongs to the complex I 49 kDa subunit family. As to quaternary structure, NDH-1 is composed of 14 different subunits. Subunits NuoB, C, D, E, F, and G constitute the peripheral sector of the complex.

It localises to the cell inner membrane. The enzyme catalyses a quinone + NADH + 5 H(+)(in) = a quinol + NAD(+) + 4 H(+)(out). NDH-1 shuttles electrons from NADH, via FMN and iron-sulfur (Fe-S) centers, to quinones in the respiratory chain. The immediate electron acceptor for the enzyme in this species is believed to be ubiquinone. Couples the redox reaction to proton translocation (for every two electrons transferred, four hydrogen ions are translocated across the cytoplasmic membrane), and thus conserves the redox energy in a proton gradient. The sequence is that of NADH-quinone oxidoreductase subunit D from Paramagnetospirillum magneticum (strain ATCC 700264 / AMB-1) (Magnetospirillum magneticum).